Consider the following 283-residue polypeptide: Para-Rep C7 (283 aa).

The region spanning Ser3–Trp96 is the CRESS-DNA virus Rep endonuclease domain. The RCR-1 signature appears at Cys10–Leu13. A divalent metal cation contacts are provided by Glu36 and His42. Residues His42–Gln44 carry the RCR-2 motif. Residues Lys51–Lys71 carry the Nuclear localization signal motif. Tyr79 (for DNA cleavage activity) is an active-site residue. The RCR-3 motif lies at Tyr79 to Lys82. Glu84 contacts a divalent metal cation. A Nuclear localization signal motif is present at residues Trp96 to His102. Position 178 to 180 (Gly178 to Ser180) interacts with ATP.

Belongs to the nanoviridea/circoviridae replication-associated protein family. Homooligomer (Potential). Rep binds to repeated DNA motifs (iterons). Requires Mg(2+) as cofactor. Mn(2+) is required as a cofactor.

It is found in the host nucleus. The catalysed reaction is ATP + H2O = ADP + phosphate + H(+). Functionally, initiates and terminates the replication only of its own subviral DNA molecule. The closed circular ssDNA genome is first converted to a superhelical dsDNA. Rep binds a specific hairpin at the genome origin of replication. Introduces an endonucleolytic nick within the intergenic region of the genome, thereby initiating the rolling circle replication (RCR). Following cleavage, binds covalently to the 5'-phosphate of DNA as a tyrosyl ester. The cleavage gives rise to a free 3'-OH that serves as a primer for the cellular DNA polymerase. The polymerase synthesizes the (+) strand DNA by rolling circle mechanism. After one round of replication, a Rep-catalyzed nucleotidyl transfer reaction releases a circular single-stranded virus genome, thereby terminating the replication. Displays origin-specific DNA cleavage, nucleotidyl transferase, ATPase and helicase activities. The chain is Para-Rep C7 (C7) from Faba bean necrotic yellows C7 alphasatellite (FBNYC7A).